The sequence spans 421 residues: 3-isopropylmalate dehydratase large subunit (421 aa).

[4Fe-4S] cluster is bound by residues Cys301, Cys361, and Cys364.

The protein belongs to the aconitase/IPM isomerase family. LeuC type 2 subfamily. As to quaternary structure, heterodimer of LeuC and LeuD. [4Fe-4S] cluster serves as cofactor.

It carries out the reaction (2R,3S)-3-isopropylmalate = (2S)-2-isopropylmalate. Its pathway is amino-acid biosynthesis; L-leucine biosynthesis; L-leucine from 3-methyl-2-oxobutanoate: step 2/4. In terms of biological role, catalyzes the isomerization between 2-isopropylmalate and 3-isopropylmalate, via the formation of 2-isopropylmaleate. This Desulfitobacterium hafniense (strain Y51) protein is 3-isopropylmalate dehydratase large subunit.